A 505-amino-acid polypeptide reads, in one-letter code: Cytochrome P450 52C1 (505 aa).

The chain crosses the membrane as a helical span at residues 4–21 (LFCFLAGIIVVYKAAQYY). Cys-453 serves as a coordination point for heme.

The protein belongs to the cytochrome P450 family. Requires heme as cofactor.

It localises to the membrane. Together with an NADPH cytochrome P450 the enzyme system catalyzes the terminal hydroxylation as the first step in the assimilation of alkanes and fatty acids. This is Cytochrome P450 52C1 (CYP52C1) from Candida tropicalis (Yeast).